The primary structure comprises 387 residues: Major outer membrane protein P.IA (387 aa).

The N-terminal stretch at 1 to 19 (MRKKLTALVLSALPLAAVA) is a signal peptide.

This sequence belongs to the Gram-negative porin family. As to quaternary structure, homotrimer.

The protein resides in the cell outer membrane. Functionally, serves as a slightly cation selective porin. Major antigen on the gonococcal cell surface and it may have pathogenic properties in addition to its porin activity. The protein is Major outer membrane protein P.IA (porA) of Neisseria meningitidis serogroup C.